Consider the following 301-residue polypeptide: Amylovoran biosynthesis glycosyltransferase AmsB (301 aa).

The protein belongs to the glycosyltransferase 2 family.

The protein operates within glycan metabolism; exopolysaccharide biosynthesis. Its function is as follows. Involved in the biosynthesis of amylovoran, which functions as a virulence factor. May function as a glycosyl transferase which transfers galactose from UDP-galactose to a lipid-linked amylovoran-subunit precursor. This chain is Amylovoran biosynthesis glycosyltransferase AmsB (amsB), found in Erwinia amylovora (Fire blight bacteria).